A 330-amino-acid polypeptide reads, in one-letter code: Beta-ketoacyl-[acyl-carrier-protein] synthase III (330 aa).

Active-site residues include Cys-114 and His-257. The segment at 258–262 is ACP-binding; that stretch reads QANLR. Residue Asn-287 is part of the active site.

This sequence belongs to the thiolase-like superfamily. FabH family. Homodimer.

The protein resides in the cytoplasm. It carries out the reaction malonyl-[ACP] + acetyl-CoA + H(+) = 3-oxobutanoyl-[ACP] + CO2 + CoA. The protein operates within lipid metabolism; fatty acid biosynthesis. Its function is as follows. Catalyzes the condensation reaction of fatty acid synthesis by the addition to an acyl acceptor of two carbons from malonyl-ACP. Catalyzes the first condensation reaction which initiates fatty acid synthesis and may therefore play a role in governing the total rate of fatty acid production. Possesses both acetoacetyl-ACP synthase and acetyl transacylase activities. Its substrate specificity determines the biosynthesis of branched-chain and/or straight-chain of fatty acids. This Nitratidesulfovibrio vulgaris (strain ATCC 29579 / DSM 644 / CCUG 34227 / NCIMB 8303 / VKM B-1760 / Hildenborough) (Desulfovibrio vulgaris) protein is Beta-ketoacyl-[acyl-carrier-protein] synthase III.